The following is a 475-amino-acid chain: Chemotaxis protein MotD (475 aa).

3 disordered regions span residues Met-1 to Gly-175, Leu-195 to Asp-243, and Gly-408 to Met-475. A compositionally biased stretch (polar residues) spans Arg-9 to Val-22. Residues Ala-79 to Ala-100 show a composition bias toward low complexity. Basic and acidic residues predominate over residues His-143 to Ile-155. The span at Gly-408–Gln-417 shows a compositional bias: gly residues. The segment covering Glu-427–Thr-449 has biased composition (basic and acidic residues).

It is found in the cytoplasm. Required for the rotation of the flagellar motor. Has a positive effect as flagellar rotation increases when an excess of motd is present. The sequence is that of Chemotaxis protein MotD (motD) from Rhizobium meliloti (Ensifer meliloti).